Here is a 225-residue protein sequence, read N- to C-terminus: Mitochondrial inner membrane protease ATP23 (225 aa).

H124 contributes to the a divalent metal cation binding site. E125 is an active-site residue. H128 provides a ligand contact to a divalent metal cation.

This sequence belongs to the peptidase M76 family.

Its subcellular location is the mitochondrion inner membrane. Has a dual role in the assembly of mitochondrial ATPase. Acts as a protease that removes N-terminal residues of mitochondrial ATPase CF(0) subunit 6 at the intermembrane space side. Also involved in the correct assembly of the membrane-embedded ATPase CF(0) particle, probably mediating association of subunit 6 with the subunit 9 ring. The protein is Mitochondrial inner membrane protease ATP23 (ATP23) of Candida glabrata (strain ATCC 2001 / BCRC 20586 / JCM 3761 / NBRC 0622 / NRRL Y-65 / CBS 138) (Yeast).